A 205-amino-acid polypeptide reads, in one-letter code: Molybdenum cofactor guanylyltransferase (205 aa).

Residues 14-16 (LAG), Lys-27, Asp-77, and Asp-107 contribute to the GTP site. Asp-107 serves as a coordination point for Mg(2+).

Belongs to the MobA family. As to quaternary structure, monomer. Requires Mg(2+) as cofactor.

It localises to the cytoplasm. It carries out the reaction Mo-molybdopterin + GTP + H(+) = Mo-molybdopterin guanine dinucleotide + diphosphate. Its function is as follows. Transfers a GMP moiety from GTP to Mo-molybdopterin (Mo-MPT) cofactor (Moco or molybdenum cofactor) to form Mo-molybdopterin guanine dinucleotide (Mo-MGD) cofactor. The polypeptide is Molybdenum cofactor guanylyltransferase (Burkholderia cenocepacia (strain HI2424)).